A 504-amino-acid polypeptide reads, in one-letter code: Anaerobic nitric oxide reductase transcription regulator NorR (504 aa).

D57 carries the post-translational modification 4-aspartylphosphate. The Sigma-54 factor interaction domain occupies 187-416; it reads MIGLSPGMTQ…LEHAIHRAVV (230 aa). ATP is bound by residues 215 to 222 and 278 to 287; these read GETGTGKE and ADNGTLFLDE. A DNA-binding region (H-T-H motif) is located at residues 479-498; sequence WAACARMLETDVANLHRLAK.

The protein operates within nitrogen metabolism; nitric oxide reduction. Required for the expression of anaerobic nitric oxide (NO) reductase, acts as a transcriptional activator for at least the norVW operon. Activation also requires sigma-54. The chain is Anaerobic nitric oxide reductase transcription regulator NorR from Escherichia coli O45:K1 (strain S88 / ExPEC).